Here is a 434-residue protein sequence, read N- to C-terminus: Trigger factor 2 (434 aa).

The PPIase FKBP-type domain occupies 164–247 (GDTVTVDYDC…VKKVERIEIL (84 aa)).

The protein belongs to the FKBP-type PPIase family. Tig subfamily.

It is found in the cytoplasm. It catalyses the reaction [protein]-peptidylproline (omega=180) = [protein]-peptidylproline (omega=0). Functionally, involved in protein export. Acts as a chaperone by maintaining the newly synthesized protein in an open conformation. Functions as a peptidyl-prolyl cis-trans isomerase. This Desulfitobacterium hafniense (strain Y51) protein is Trigger factor 2.